Consider the following 253-residue polypeptide: MATTNKVYFIAGGNRGIGLSLVKELSSREGTTVFASARKPEAATELQEWSKSHPNVKTVELDVTSQQSANEAAQSVAKAVDGIDVLWLNSGICQSYYTVMEAPEEVWNAHYQTNVLGPIHVFKAFYPLLTKKKTRQVIFTSSECGSMGDFRATGFSAYGQSKAAINFTMKELSVELADEHFTFISIHPGVVKTDMNADAIKKFTETSPEMLTYLKKVTIIPEESVSSMLKVVDNLKPENNGSFYRYDGTIIPF.

NADP(+) is bound by residues Ile17, Ser36, Asp62, Asn89, Lys123, Tyr158, Lys162, Val191, and Thr193. Tyr158 serves as the catalytic Proton acceptor. Lys162 (lowers pKa of active site Tyr) is an active-site residue.

It belongs to the short-chain dehydrogenases/reductases (SDR) family.

The protein localises to the cytoplasm. Its subcellular location is the nucleus. This is an uncharacterized protein from Schizosaccharomyces pombe (strain 972 / ATCC 24843) (Fission yeast).